The primary structure comprises 858 residues: Leucine--tRNA ligase (858 aa).

Positions 42–52 (PYPSGRLHMGH) match the 'HIGH' region motif. Residues 618–622 (KMSKS) carry the 'KMSKS' region motif. Lysine 621 lines the ATP pocket.

Belongs to the class-I aminoacyl-tRNA synthetase family.

It localises to the cytoplasm. It carries out the reaction tRNA(Leu) + L-leucine + ATP = L-leucyl-tRNA(Leu) + AMP + diphosphate. The chain is Leucine--tRNA ligase from Vibrio atlanticus (strain LGP32) (Vibrio splendidus (strain Mel32)).